Reading from the N-terminus, the 195-residue chain is ATP-dependent Clp protease proteolytic subunit (195 aa).

S99 (nucleophile) is an active-site residue. The active site involves H124.

Belongs to the peptidase S14 family. Fourteen ClpP subunits assemble into 2 heptameric rings which stack back to back to give a disk-like structure with a central cavity, resembling the structure of eukaryotic proteasomes.

It is found in the cytoplasm. It carries out the reaction Hydrolysis of proteins to small peptides in the presence of ATP and magnesium. alpha-casein is the usual test substrate. In the absence of ATP, only oligopeptides shorter than five residues are hydrolyzed (such as succinyl-Leu-Tyr-|-NHMec, and Leu-Tyr-Leu-|-Tyr-Trp, in which cleavage of the -Tyr-|-Leu- and -Tyr-|-Trp bonds also occurs).. In terms of biological role, cleaves peptides in various proteins in a process that requires ATP hydrolysis. Has a chymotrypsin-like activity. Plays a major role in the degradation of misfolded proteins. This Desulforamulus reducens (strain ATCC BAA-1160 / DSM 100696 / MI-1) (Desulfotomaculum reducens) protein is ATP-dependent Clp protease proteolytic subunit.